Consider the following 337-residue polypeptide: Ketol-acid reductoisomerase (NADP(+)) (337 aa).

Residues 3–183 (VEMFYDADAD…GGARAGVIKT (181 aa)) form the KARI N-terminal Rossmann domain. NADP(+) contacts are provided by residues 26–29 (YGSQ), lysine 49, serine 52, serine 54, and 84–87 (DTAQ). Histidine 109 is an active-site residue. Residue glycine 135 coordinates NADP(+). A KARI C-terminal knotted domain is found at 184 to 329 (TFKEETETDL…KKLRDLMSWV (146 aa)). Mg(2+)-binding residues include aspartate 192, glutamate 196, glutamate 228, and glutamate 232. Serine 253 provides a ligand contact to substrate.

This sequence belongs to the ketol-acid reductoisomerase family. Mg(2+) serves as cofactor.

It carries out the reaction (2R)-2,3-dihydroxy-3-methylbutanoate + NADP(+) = (2S)-2-acetolactate + NADPH + H(+). The enzyme catalyses (2R,3R)-2,3-dihydroxy-3-methylpentanoate + NADP(+) = (S)-2-ethyl-2-hydroxy-3-oxobutanoate + NADPH + H(+). Its pathway is amino-acid biosynthesis; L-isoleucine biosynthesis; L-isoleucine from 2-oxobutanoate: step 2/4. It participates in amino-acid biosynthesis; L-valine biosynthesis; L-valine from pyruvate: step 2/4. Involved in the biosynthesis of branched-chain amino acids (BCAA). Catalyzes an alkyl-migration followed by a ketol-acid reduction of (S)-2-acetolactate (S2AL) to yield (R)-2,3-dihydroxy-isovalerate. In the isomerase reaction, S2AL is rearranged via a Mg-dependent methyl migration to produce 3-hydroxy-3-methyl-2-ketobutyrate (HMKB). In the reductase reaction, this 2-ketoacid undergoes a metal-dependent reduction by NADPH to yield (R)-2,3-dihydroxy-isovalerate. This chain is Ketol-acid reductoisomerase (NADP(+)), found in Mycolicibacterium vanbaalenii (strain DSM 7251 / JCM 13017 / BCRC 16820 / KCTC 9966 / NRRL B-24157 / PYR-1) (Mycobacterium vanbaalenii).